Here is a 202-residue protein sequence, read N- to C-terminus: Crossover junction endodeoxyribonuclease RuvC (202 aa).

Catalysis depends on residues Asp7, Glu68, and Asp141. Mg(2+)-binding residues include Asp7, Glu68, and Asp141.

The protein belongs to the RuvC family. Homodimer which binds Holliday junction (HJ) DNA. The HJ becomes 2-fold symmetrical on binding to RuvC with unstacked arms; it has a different conformation from HJ DNA in complex with RuvA. In the full resolvosome a probable DNA-RuvA(4)-RuvB(12)-RuvC(2) complex forms which resolves the HJ. The cofactor is Mg(2+).

It localises to the cytoplasm. The catalysed reaction is Endonucleolytic cleavage at a junction such as a reciprocal single-stranded crossover between two homologous DNA duplexes (Holliday junction).. In terms of biological role, the RuvA-RuvB-RuvC complex processes Holliday junction (HJ) DNA during genetic recombination and DNA repair. Endonuclease that resolves HJ intermediates. Cleaves cruciform DNA by making single-stranded nicks across the HJ at symmetrical positions within the homologous arms, yielding a 5'-phosphate and a 3'-hydroxyl group; requires a central core of homology in the junction. The consensus cleavage sequence is 5'-(A/T)TT(C/G)-3'. Cleavage occurs on the 3'-side of the TT dinucleotide at the point of strand exchange. HJ branch migration catalyzed by RuvA-RuvB allows RuvC to scan DNA until it finds its consensus sequence, where it cleaves and resolves the cruciform DNA. The chain is Crossover junction endodeoxyribonuclease RuvC from Clavibacter michiganensis subsp. michiganensis (strain NCPPB 382).